Here is a 244-residue protein sequence, read N- to C-terminus: U11/U12 small nuclear ribonucleoprotein 35 kDa protein (244 aa).

Residues 51 to 129 (LTLFVARLNL…HEIFVDYELE (79 aa)) enclose the RRM domain. Basic and acidic residues predominate over residues 146-162 (GKKESGQLRFGGRDRPF). The interval 146–244 (GKKESGQLRF…KSRDKRDRSK (99 aa)) is disordered. Lysine 172 is covalently cross-linked (Glycyl lysine isopeptide (Lys-Gly) (interchain with G-Cter in SUMO2)). Basic and acidic residues-rich tracts occupy residues 173 to 185 (NEPH…ERRE) and 192 to 244 (RHWD…DRSK).

Component of the U11/U12 snRNPs that are part of the U12-type spliceosome.

It is found in the nucleus. The chain is U11/U12 small nuclear ribonucleoprotein 35 kDa protein (Snrnp35) from Mus musculus (Mouse).